The chain runs to 61 residues: Alpha-conotoxin PnIB (61 aa).

A signal peptide spans 1–21; it reads MGMRMMFTVFLLVVLATTVVS. A propeptide spanning residues 22-44 is cleaved from the precursor; that stretch reads FTSDRASDDGNAAASDLIALTIK. Cystine bridges form between Cys-46-Cys-52 and Cys-47-Cys-60. Positions 48–50 are ser-Xaa-Pro motif, crucial for potent interaction with nAChR; sequence SLP. Tyr-59 is subject to Sulfotyrosine. Cys-60 carries the cysteine amide modification.

The protein belongs to the conotoxin A superfamily. In terms of tissue distribution, expressed by the venom duct.

The protein resides in the secreted. In terms of biological role, alpha-conotoxins act on postsynaptic membranes, they bind to the nicotinic acetylcholine receptors (nAChR) and thus inhibit them. This toxin blocks mammalian nAChRs (alpha-7/CHRNA7 &gt; alpha-3-beta-2/CHRNA3-CHRNB2). This is Alpha-conotoxin PnIB from Conus pennaceus (Feathered cone).